Here is a 659-residue protein sequence, read N- to C-terminus: Acetyl-coenzyme A synthetase (659 aa).

The tract at residues 1–35 (MATEQTKGQSSESISSVLSERRKFPPPEAFSSQSH) is disordered. Residues 205–208 (RRGS), Thr323, and Asn347 each bind CoA. ATP is bound by residues 399-401 (GEP), 423-428 (DTWWQT), Asp512, and Arg527. Ser535 lines the CoA pocket. Arg538 contributes to the ATP binding site. Residues Val549, His551, and Val554 each coordinate Mg(2+). Lys621 carries the N6-acetyllysine modification.

This sequence belongs to the ATP-dependent AMP-binding enzyme family. It depends on Mg(2+) as a cofactor. Post-translationally, acetylated. Deacetylation by the SIR2-homolog deacetylase activates the enzyme.

It carries out the reaction acetate + ATP + CoA = acetyl-CoA + AMP + diphosphate. Catalyzes the conversion of acetate into acetyl-CoA (AcCoA), an essential intermediate at the junction of anabolic and catabolic pathways. AcsA undergoes a two-step reaction. In the first half reaction, AcsA combines acetate with ATP to form acetyl-adenylate (AcAMP) intermediate. In the second half reaction, it can then transfer the acetyl group from AcAMP to the sulfhydryl group of CoA, forming the product AcCoA. This is Acetyl-coenzyme A synthetase from Chlorobaculum tepidum (strain ATCC 49652 / DSM 12025 / NBRC 103806 / TLS) (Chlorobium tepidum).